Consider the following 299-residue polypeptide: Hemolysin C homolog (299 aa).

CBS domains lie at 80-142 (MVPR…NGRL) and 145-202 (LIRK…IDDE).

Belongs to the UPF0053 family. Hemolysin C subfamily.

This is Hemolysin C homolog (tlyC) from Rickettsia conorii (strain ATCC VR-613 / Malish 7).